Consider the following 305-residue polypeptide: Dihydroorotate dehydrogenase B (NAD(+)), catalytic subunit (305 aa).

Residues serine 20 and 44 to 45 (KG) each bind FMN. Substrate contacts are provided by residues lysine 44 and 68-72 (NAIGI). The FMN site is built by asparagine 98 and asparagine 126. Asparagine 126 is a substrate binding site. Cysteine 129 (nucleophile) is an active-site residue. FMN contacts are provided by lysine 165 and isoleucine 191. Residue 192 to 193 (NT) coordinates substrate. Residues glycine 217, 243–244 (GG), and 265–266 (GT) each bind FMN.

This sequence belongs to the dihydroorotate dehydrogenase family. Type 1 subfamily. Heterotetramer of 2 PyrK and 2 PyrD type B subunits. Requires FMN as cofactor.

The protein resides in the cytoplasm. The catalysed reaction is (S)-dihydroorotate + NAD(+) = orotate + NADH + H(+). It participates in pyrimidine metabolism; UMP biosynthesis via de novo pathway; orotate from (S)-dihydroorotate (NAD(+) route): step 1/1. Functionally, catalyzes the conversion of dihydroorotate to orotate with NAD(+) as electron acceptor. This chain is Dihydroorotate dehydrogenase B (NAD(+)), catalytic subunit (pyrD), found in Maridesulfovibrio salexigens (strain ATCC 14822 / DSM 2638 / NCIMB 8403 / VKM B-1763) (Desulfovibrio salexigens).